The following is a 252-amino-acid chain: PF03932 family protein CutC (252 aa).

Belongs to the CutC family.

It localises to the cytoplasm. The sequence is that of PF03932 family protein CutC from Sodalis glossinidius (strain morsitans).